Consider the following 259-residue polypeptide: MAAAAAAAAGDSDSWDADTFSMEDPVRKVAGGGTAGGDRWEGEDEDEDVKDNWDDDDDENKEEAEVKPEVKISEKKKIAEKIKEKERQQKKRQEEIKKRLEEPEESKVLTPEEQLADKLRLKKLQEESDLELAKETFGVNNTVYGIDAMNPSSRDDFTEFGKLLKDKITQYEKSLYYASFLEALVRDVCISLEIDDLKKITNSLTVLCSEKQKQEKQSKAKKKKKGVVPGGGLKATMKDDLADYGGYDGGYVQDYEDFM.

A sufficient for interaction with EIF3B region spans residues 1–70 (MAAAAAAAAG…KEEAEVKPEV (70 aa)). A disordered region spans residues 1 to 111 (MAAAAAAAAG…EPEESKVLTP (111 aa)). Ser12, Ser14, and Ser21 each carry phosphoserine. The span at 41–62 (EGEDEDEDVKDNWDDDDDENKE) shows a compositional bias: acidic residues. Over residues 63–107 (EAEVKPEVKISEKKKIAEKIKEKERQQKKRQEEIKKRLEEPEESK) the composition is skewed to basic and acidic residues. The stretch at 71 to 136 (KISEKKKIAE…ESDLELAKET (66 aa)) forms a coiled coil. A Glycyl lysine isopeptide (Lys-Gly) (interchain with G-Cter in SUMO2) cross-link involves residue Lys107. Thr110 is modified (phosphothreonine). Ser128 is modified (phosphoserine). The segment at 218–247 (SKAKKKKKGVVPGGGLKATMKDDLADYGGY) is disordered. The interval 244–259 (YGGYDGGYVQDYEDFM) is promotes stable association with the 40S ribosome. Tyr255 carries the post-translational modification Phosphotyrosine.

It belongs to the eIF-3 subunit J family. Component of the eukaryotic translation initiation factor 3 (eIF-3) complex, which is composed of 13 subunits: EIF3A, EIF3B, EIF3C, EIF3D, EIF3E, EIF3F, EIF3G, EIF3H, EIF3I, EIF3J, EIF3K, EIF3L and EIF3M. The eIF-3 complex appears to include 3 stable modules: module A is composed of EIF3A, EIF3B, EIF3G and EIF3I; module B is composed of EIF3F, EIF3H, and EIF3M; and module C is composed of EIF3C, EIF3D, EIF3E, EIF3K and EIF3L. EIF3C of module C binds EIF3B of module A and EIF3H of module B, thereby linking the three modules. EIF3J is a labile subunit that binds to the eIF-3 complex via EIF3B. The eIF-3 complex interacts with RPS6KB1 under conditions of nutrient depletion. Mitogenic stimulation leads to binding and activation of a complex composed of MTOR and RPTOR, leading to phosphorylation and release of RPS6KB1 and binding of EIF4B to eIF-3. Post-translationally, phosphorylated. Phosphorylation is enhanced upon serum stimulation.

It localises to the cytoplasm. Its function is as follows. Component of the eukaryotic translation initiation factor 3 (eIF-3) complex, which is required for several steps in the initiation of protein synthesis. The eIF-3 complex associates with the 40S ribosome and facilitates the recruitment of eIF-1, eIF-1A, eIF-2:GTP:methionyl-tRNAi and eIF-5 to form the 43S pre-initiation complex (43S PIC). The eIF-3 complex stimulates mRNA recruitment to the 43S PIC and scanning of the mRNA for AUG recognition. The eIF-3 complex is also required for disassembly and recycling of post-termination ribosomal complexes and subsequently prevents premature joining of the 40S and 60S ribosomal subunits prior to initiation. The eIF-3 complex specifically targets and initiates translation of a subset of mRNAs involved in cell proliferation, including cell cycling, differentiation and apoptosis, and uses different modes of RNA stem-loop binding to exert either translational activation or repression. This subunit binds directly within the mRNA entry channel of the 40S ribosome to the aminoacyl (A) site. It may regulate the interaction between the 43S PIC and mRNA. The protein is Eukaryotic translation initiation factor 3 subunit J (Eif3j) of Rattus norvegicus (Rat).